A 104-amino-acid polypeptide reads, in one-letter code: DNA-binding transcriptional repressor TubR (104 aa).

2 consecutive DNA-binding regions (HTH) follow at residues 43-50 and 54-65; these read KTAVAEMI and KPTVFATVNSFY.

As to quaternary structure, homodimer. Binds to tubC DNA, the TubR-DNA complex binds to TubZ.

Its function is as follows. A DNA-binding protein that is part of the type III plasmid partition system used to ensure correct segregation of the pBtoxis plasmid. Cooperatively binds to the centromere-like site (tubC), which may seed filament formation by the TubZ polymerizing GTPase, stabilizing TubZ filaments. TubR-tubC complexes track the depolymerizing minus end of the filament, probably pulling plasmid within the cell. Required for plasmid replication. Negatively regulates levels of TubZ; its effect on RNA expression has not been shown. Specifically binds iterons, 12-bp imperfect direct repeats that function as a plasmid origin of replication. Four TubR dimers bind to tubC, forming an extended bent DNA-protein filament with protein wrapping helically around the outside of the DNA. The protein is DNA-binding transcriptional repressor TubR of Bacillus thuringiensis subsp. israelensis.